The chain runs to 315 residues: 4-hydroxy-3-methylbut-2-enyl diphosphate reductase (315 aa).

C12 contacts [4Fe-4S] cluster. H41 and H74 together coordinate (2E)-4-hydroxy-3-methylbut-2-enyl diphosphate. Dimethylallyl diphosphate contacts are provided by H41 and H74. 2 residues coordinate isopentenyl diphosphate: H41 and H74. Residue C96 coordinates [4Fe-4S] cluster. H124 is a binding site for (2E)-4-hydroxy-3-methylbut-2-enyl diphosphate. H124 is a dimethylallyl diphosphate binding site. H124 lines the isopentenyl diphosphate pocket. E126 serves as the catalytic Proton donor. T168 contacts (2E)-4-hydroxy-3-methylbut-2-enyl diphosphate. [4Fe-4S] cluster is bound at residue C198. S226, S227, N228, and S270 together coordinate (2E)-4-hydroxy-3-methylbut-2-enyl diphosphate. Dimethylallyl diphosphate contacts are provided by S226, S227, N228, and S270. Isopentenyl diphosphate is bound by residues S226, S227, N228, and S270.

It belongs to the IspH family. Requires [4Fe-4S] cluster as cofactor.

It catalyses the reaction isopentenyl diphosphate + 2 oxidized [2Fe-2S]-[ferredoxin] + H2O = (2E)-4-hydroxy-3-methylbut-2-enyl diphosphate + 2 reduced [2Fe-2S]-[ferredoxin] + 2 H(+). The catalysed reaction is dimethylallyl diphosphate + 2 oxidized [2Fe-2S]-[ferredoxin] + H2O = (2E)-4-hydroxy-3-methylbut-2-enyl diphosphate + 2 reduced [2Fe-2S]-[ferredoxin] + 2 H(+). The protein operates within isoprenoid biosynthesis; dimethylallyl diphosphate biosynthesis; dimethylallyl diphosphate from (2E)-4-hydroxy-3-methylbutenyl diphosphate: step 1/1. It functions in the pathway isoprenoid biosynthesis; isopentenyl diphosphate biosynthesis via DXP pathway; isopentenyl diphosphate from 1-deoxy-D-xylulose 5-phosphate: step 6/6. Functionally, catalyzes the conversion of 1-hydroxy-2-methyl-2-(E)-butenyl 4-diphosphate (HMBPP) into a mixture of isopentenyl diphosphate (IPP) and dimethylallyl diphosphate (DMAPP). Acts in the terminal step of the DOXP/MEP pathway for isoprenoid precursor biosynthesis. This chain is 4-hydroxy-3-methylbut-2-enyl diphosphate reductase, found in Pseudomonas syringae pv. tomato (strain ATCC BAA-871 / DC3000).